We begin with the raw amino-acid sequence, 279 residues long: Energy-coupling factor transporter ATP-binding protein EcfA2 (279 aa).

An ABC transporter domain is found at 3 to 245 (IALENVNFIY…VVFMEEVQLG (243 aa)). Residue 40–47 (GHTGSGKS) coordinates ATP.

This sequence belongs to the ABC transporter superfamily. Energy-coupling factor EcfA family. In terms of assembly, forms a stable energy-coupling factor (ECF) transporter complex composed of 2 membrane-embedded substrate-binding proteins (S component), 2 ATP-binding proteins (A component) and 2 transmembrane proteins (T component).

The protein resides in the cell membrane. In terms of biological role, ATP-binding (A) component of a common energy-coupling factor (ECF) ABC-transporter complex. Unlike classic ABC transporters this ECF transporter provides the energy necessary to transport a number of different substrates. This is Energy-coupling factor transporter ATP-binding protein EcfA2 from Streptococcus pneumoniae serotype 2 (strain D39 / NCTC 7466).